The chain runs to 397 residues: MSIYVASTTAPVNIATLKYWGKRDSMLNLPTNSSISVTLSQEDLRTLTSAATGPELAEDRLWLNGKPESLGNARTQQCLADLRALRRALETEEPDLPRMSEWKLHIVSENNFPTAAGLASSAAGFAALVVAVAKLYGLPQDYSEISKIARKGSGSACRSLYGGYVAWEMGAEADGSDSRAVQIADVEHWPEMRAAILVVSADRKDTPSTSGMQQTVHTSDLFKERVATVVPRRYGEMAAAIRARDFATFARLTMQDSNSFHATCLDSFPPIFYMNDTSRRIVKLCHLINEFYNETIVAYTFDAGPNAVLYYLAENEARLCGFLSAVFGANDGWETTFSTEQRATFAAQFDECVRGKLATDLDDELHRGVARLIFTKVGPGPQDTKSSLIDPETGLPR.

(R)-5-diphosphomevalonate contacts are provided by residues 19 to 22 (YWGK), R74, 153 to 158 (SGSACR), and T209. The disordered stretch occupies residues 378-397 (GPGPQDTKSSLIDPETGLPR).

It belongs to the diphosphomevalonate decarboxylase family. In terms of assembly, homodimer.

It catalyses the reaction (R)-5-diphosphomevalonate + ATP = isopentenyl diphosphate + ADP + phosphate + CO2. The protein operates within isoprenoid biosynthesis; isopentenyl diphosphate biosynthesis via mevalonate pathway; isopentenyl diphosphate from (R)-mevalonate: step 3/3. Its function is as follows. Diphosphomevalonate decarboxylase; part of the second module of ergosterol biosynthesis pathway that includes the middle steps of the pathway. The second module is carried out in the vacuole and involves the formation of farnesyl diphosphate, which is also an important intermediate in the biosynthesis of ubiquinone, dolichol, heme and prenylated proteins. Activity by the mevalonate kinase ERG12 first converts mevalonate into 5-phosphomevalonate. 5-phosphomevalonate is then further converted to 5-diphosphomevalonate by the phosphomevalonate kinase ERG8. The diphosphomevalonate decarboxylase MVD1/ERG19 then produces isopentenyl diphosphate. The isopentenyl-diphosphate delta-isomerase IDI1 then catalyzes the 1,3-allylic rearrangement of the homoallylic substrate isopentenyl (IPP) to its highly electrophilic allylic isomer, dimethylallyl diphosphate (DMAPP). Finally the farnesyl diphosphate synthase ERG20 catalyzes the sequential condensation of isopentenyl pyrophosphate with dimethylallyl pyrophosphate, and then with the resultant geranylpyrophosphate to the ultimate product farnesyl pyrophosphate. The polypeptide is Diphosphomevalonate decarboxylase (Eremothecium gossypii (strain ATCC 10895 / CBS 109.51 / FGSC 9923 / NRRL Y-1056) (Yeast)).